The chain runs to 421 residues: Nacrein-like protein M (421 aa).

N-linked (GlcNAc...) asparagine glycosylation occurs at asparagine 27. In terms of domain architecture, Alpha-carbonic anhydrase spans 33-420 (AGFSYDRSIC…KNKVTVYKSF (388 aa)). Histidine 132, histidine 134, and histidine 157 together coordinate Zn(2+). Acidic residues predominate over residues 197 to 206 (DGFGDEPDDE). Residues 197 to 303 (DGFGDEPDDE…GENGHKHGCR (107 aa)) are disordered. Positions 207–219 (ECKRILKGHHPDN) are enriched in basic and acidic residues. Low complexity predominate over residues 220–295 (NENGNGDNGN…NNGDNGNNGE (76 aa)). 24 tandem repeats follow at residues 225 to 227 (GDN), 228 to 230 (GNN), 231 to 233 (GYN), 234 to 236 (GDN), 237 to 239 (GNN), 240 to 242 (GDN), 243 to 245 (GNN), 246 to 248 (GYN), 249 to 251 (GDN), 252 to 254 (GNN), 255 to 257 (GDN), 258 to 260 (GNN), 261 to 263 (GYN), 264 to 266 (GDN), 267 to 269 (GNN), 270 to 272 (GDN), 273 to 275 (GNN), 276 to 278 (GEN), 279 to 281 (GNN), 282 to 284 (GEN), 285 to 287 (GNN), 288 to 290 (GDN), 291 to 292 (GN), and 294 to 296 (GEN). A 24 X 3 AA approximate tandem repeats of G-X-N region spans residues 225 to 296 (GDNGNNGYNG…NGDNGNNGEN (72 aa)). A substrate-binding site is contributed by 361–362 (TT).

The protein belongs to the alpha-carbonic anhydrase family. As to quaternary structure, homooligomer; disulfide-linked. May also be disulfide-linked to insoluble organic matrix. The cofactor is Zn(2+). In terms of tissue distribution, expressed in the mantle.

The protein localises to the secreted. The protein resides in the extracellular space. It is found in the extracellular matrix. The enzyme catalyses hydrogencarbonate + H(+) = CO2 + H2O. Its function is as follows. Acts as a negative regulator for calcification in the shells of mollusks. May function both as a calcium concentrator and as a carbonic anhydrase required for production of carbonate ions, which are assembled to CaCO(3) at mineralization sites. Is important for shell formation in both the calcitic prismatic layer and the aragonitic nacreous layerr. Shows inhibitory activity of crystal formation when present in free state but, when attached to the insoluble matrix, may regulate the form and size of aragonite crystal. In Pinctada maxima (Silver-lipped pearl oyster), this protein is Nacrein-like protein M.